Reading from the N-terminus, the 890-residue chain is Alanine--tRNA ligase (890 aa).

The Zn(2+) site is built by His-572, His-576, Cys-674, and His-678.

The protein belongs to the class-II aminoacyl-tRNA synthetase family. Requires Zn(2+) as cofactor.

Its subcellular location is the cytoplasm. The catalysed reaction is tRNA(Ala) + L-alanine + ATP = L-alanyl-tRNA(Ala) + AMP + diphosphate. In terms of biological role, catalyzes the attachment of alanine to tRNA(Ala) in a two-step reaction: alanine is first activated by ATP to form Ala-AMP and then transferred to the acceptor end of tRNA(Ala). Also edits incorrectly charged Ser-tRNA(Ala) and Gly-tRNA(Ala) via its editing domain. The protein is Alanine--tRNA ligase of Saccharopolyspora erythraea (strain ATCC 11635 / DSM 40517 / JCM 4748 / NBRC 13426 / NCIMB 8594 / NRRL 2338).